A 556-amino-acid polypeptide reads, in one-letter code: Glypican-4 (556 aa).

An N-terminal signal peptide occupies residues 1-18 (MARFGLPALLCTLAVLSA). Position 357 is a phosphoserine (Ser357). O-linked (Xyl...) (glycosaminoglycan) serine glycosylation is found at Ser494, Ser498, and Ser500. Asn514 is a glycosylation site (N-linked (GlcNAc...) asparagine). Residue Ser529 is the site of GPI-anchor amidated serine attachment. Positions 530–556 (AGVRPGAQAYLLTVFCILFLVMQREWR) are cleaved as a propeptide — removed in mature form.

It belongs to the glypican family.

It localises to the cell membrane. It is found in the secreted. Its subcellular location is the extracellular space. Its function is as follows. Cell surface proteoglycan that bears heparan sulfate. May be involved in the development of kidney tubules and of the central nervous system. The protein is Glypican-4 (GPC4) of Homo sapiens (Human).